The primary structure comprises 338 residues: MENLDALVSQALEAVQSAEDINALEQIRVQYLGKKGELTQVMKTLGNLPAEERPQVGALINVAKERVTGVLNARMALFEEAELAAKLSAESIDVTLPGRGQTSGGLHPVTRTLERIEQFFTHIGYGIAEGPEVEDDYHNFEALNIPGHHPARSMHDTFYFNANMLLRTHTSPVQVRTMESKKPPIRIVCPGRVYRSDSDITHSPMFHQVEGLLVDRDINFADLKGTIEEFLRVFFEKELAVRFRPSYFPFTEPSAEVDMECVMCSGKGCRVCKQTGWLEVMGCGMVHPNVLRMSGIDPEEFSGFAFGMGVERLAMLRYGVNDLRLFFDNDLRFLAQFR.

Glu252 is a binding site for Mg(2+).

This sequence belongs to the class-II aminoacyl-tRNA synthetase family. Phe-tRNA synthetase alpha subunit type 1 subfamily. In terms of assembly, tetramer of two alpha and two beta subunits. The cofactor is Mg(2+).

It localises to the cytoplasm. The enzyme catalyses tRNA(Phe) + L-phenylalanine + ATP = L-phenylalanyl-tRNA(Phe) + AMP + diphosphate + H(+). The protein is Phenylalanine--tRNA ligase alpha subunit of Pseudomonas fluorescens (strain Pf0-1).